Here is a 198-residue protein sequence, read N- to C-terminus: Protein GrpE (198 aa).

Belongs to the GrpE family. Homodimer.

The protein resides in the cytoplasm. Functionally, participates actively in the response to hyperosmotic and heat shock by preventing the aggregation of stress-denatured proteins, in association with DnaK and GrpE. It is the nucleotide exchange factor for DnaK and may function as a thermosensor. Unfolded proteins bind initially to DnaJ; upon interaction with the DnaJ-bound protein, DnaK hydrolyzes its bound ATP, resulting in the formation of a stable complex. GrpE releases ADP from DnaK; ATP binding to DnaK triggers the release of the substrate protein, thus completing the reaction cycle. Several rounds of ATP-dependent interactions between DnaJ, DnaK and GrpE are required for fully efficient folding. In Actinobacillus pleuropneumoniae serotype 7 (strain AP76), this protein is Protein GrpE.